Here is a 410-residue protein sequence, read N- to C-terminus: Peptidase T (410 aa).

Position 78 (His78) interacts with Zn(2+). Asp80 is an active-site residue. Residue Asp140 coordinates Zn(2+). Catalysis depends on Glu173, which acts as the Proton acceptor. Zn(2+) is bound by residues Glu174, Asp196, and His379.

This sequence belongs to the peptidase M20B family. Requires Zn(2+) as cofactor.

The protein resides in the cytoplasm. It catalyses the reaction Release of the N-terminal residue from a tripeptide.. Functionally, cleaves the N-terminal amino acid of tripeptides. This is Peptidase T from Pectobacterium carotovorum subsp. carotovorum (strain PC1).